The sequence spans 35 residues: MEALVYTFLLVSTLGIIFFAIFFREPPKVPDKGSK.

A helical membrane pass occupies residues 3-23 (ALVYTFLLVSTLGIIFFAIFF).

Belongs to the PsbT family. In terms of assembly, PSII is composed of 1 copy each of membrane proteins PsbA, PsbB, PsbC, PsbD, PsbE, PsbF, PsbH, PsbI, PsbJ, PsbK, PsbL, PsbM, PsbT, PsbY, PsbZ, Psb30/Ycf12, at least 3 peripheral proteins of the oxygen-evolving complex and a large number of cofactors. It forms dimeric complexes.

The protein resides in the plastid. It is found in the chloroplast thylakoid membrane. Functionally, found at the monomer-monomer interface of the photosystem II (PS II) dimer, plays a role in assembly and dimerization of PSII. PSII is a light-driven water plastoquinone oxidoreductase, using light energy to abstract electrons from H(2)O, generating a proton gradient subsequently used for ATP formation. This is Photosystem II reaction center protein T from Cycas revoluta (Sago palm).